Reading from the N-terminus, the 314-residue chain is Ribosomal RNA small subunit methyltransferase A (314 aa).

S-adenosyl-L-methionine is bound by residues Asn29, Val31, Gly56, Glu77, Asp107, and Asn126. Residues 291-314 (PKADDAGDDADAQAKADGAQVSTL) are disordered. Positions 303–314 (QAKADGAQVSTL) are enriched in low complexity.

It belongs to the class I-like SAM-binding methyltransferase superfamily. rRNA adenine N(6)-methyltransferase family. RsmA subfamily.

The protein localises to the cytoplasm. It carries out the reaction adenosine(1518)/adenosine(1519) in 16S rRNA + 4 S-adenosyl-L-methionine = N(6)-dimethyladenosine(1518)/N(6)-dimethyladenosine(1519) in 16S rRNA + 4 S-adenosyl-L-homocysteine + 4 H(+). Specifically dimethylates two adjacent adenosines (A1518 and A1519) in the loop of a conserved hairpin near the 3'-end of 16S rRNA in the 30S particle. May play a critical role in biogenesis of 30S subunits. This Mycolicibacterium gilvum (strain PYR-GCK) (Mycobacterium gilvum (strain PYR-GCK)) protein is Ribosomal RNA small subunit methyltransferase A.